We begin with the raw amino-acid sequence, 125 residues long: Cystatin-like cysteine protease inhibitor EPIC2B (125 aa).

The signal sequence occupies residues 1 to 21 (MSFLRPTLALLAVTALVTTSG). N-linked (GlcNAc...) asparagine glycosylation occurs at Asn45. The Secondary area of contact motif lies at 68–72 (QVVSG).

Belongs to the cystatin family. Interacts with the host papain-like cysteine protease PIP1. Interacts with the host papain-like cysteine protease RCR3. Interacts with the host papain-like cysteine protease C14.

It localises to the secreted. Secreted effector that interacts with and inhibits the pathogenesis-related papain-like cysteine proteases C14, PIP1 and RCR3 of host plants. Inhibition of host proteases by a pathogen extracellular protease inhibitor forms a specific type of defense-counterdefense mechanism between plants and microbial pathogens. The protein is Cystatin-like cysteine protease inhibitor EPIC2B of Phytophthora infestans (Potato late blight agent).